The chain runs to 485 residues: Isocitrate dehydrogenase [NADP], chloroplastic/mitochondrial (485 aa).

Residues 1 to 65 (MLNKLTHGVF…VQFHRASAVR (65 aa)) constitute a chloroplast and mitochondrion transit peptide. Residues 147-149 (TIT) and R154 each bind NADP(+). Residue T149 coordinates substrate. Substrate-binding positions include 166–172 (SPNGTIR), R181, and R204. D323 provides a ligand contact to Mn(2+). K331 provides a ligand contact to NADP(+). D346 contacts Mn(2+). NADP(+) is bound by residues 381 to 386 (GTVTRH) and N399.

This sequence belongs to the isocitrate and isopropylmalate dehydrogenases family. Mg(2+) serves as cofactor. Requires Mn(2+) as cofactor.

Its subcellular location is the plastid. It localises to the chloroplast. It is found in the mitochondrion. It catalyses the reaction D-threo-isocitrate + NADP(+) = 2-oxoglutarate + CO2 + NADPH. Its function is as follows. May be involved in response to oxidative stresses. The protein is Isocitrate dehydrogenase [NADP], chloroplastic/mitochondrial of Arabidopsis thaliana (Mouse-ear cress).